Reading from the N-terminus, the 67-residue chain is Neurotoxin Cex10 (67 aa).

In terms of domain architecture, LCN-type CS-alpha/beta spans 1–65 (KDGYLVEVTG…TWPLPNKSCG (65 aa)). 4 disulfide bridges follow: Cys-11/Cys-64, Cys-15/Cys-40, Cys-24/Cys-45, and Cys-28/Cys-47. Cys-64 is modified (cysteine amide). Residues 65-67 (GKK) constitute a propeptide that is removed on maturation.

It belongs to the long (4 C-C) scorpion toxin superfamily. Sodium channel inhibitor family. Beta subfamily. In terms of tissue distribution, expressed by the venom gland.

The protein localises to the secreted. Beta toxins bind voltage-independently at site-4 of sodium channels (Nav) and shift the voltage of activation toward more negative potentials thereby affecting sodium channel activation and promoting spontaneous and repetitive firing. The sequence is that of Neurotoxin Cex10 from Centruroides exilicauda (Bark scorpion).